A 192-amino-acid polypeptide reads, in one-letter code: MVCIRRATVDDLLAMQACNLMCLPENYQMKYYLYHILSWPQLLYVAEDYNGRIVGYVLAKMEEESNECHGHITSLAVLRTHRKLGLATKLMTAAQAAMEQVYEAEYVSLHVRRSNRAAFNLYTETLGYKINDVEAKYYADGEDAYDMRKNLKGKQNHHHAHGHHHHHGGGCCSGDAKVVETAQAVDGKAVSK.

In terms of domain architecture, N-acetyltransferase spans 2-152; sequence VCIRRATVDD…DAYDMRKNLK (151 aa).

It belongs to the acetyltransferase family. ARD1 subfamily. As to quaternary structure, part of the NatA complex. Interacts with NAA15. Expressed in leaves, roots, shoots and flowers.

The catalysed reaction is N-terminal glycyl-[protein] + acetyl-CoA = N-terminal N(alpha)-acetylglycyl-[protein] + CoA + H(+). The enzyme catalyses N-terminal L-alanyl-[protein] + acetyl-CoA = N-terminal N(alpha)-acetyl-L-alanyl-[protein] + CoA + H(+). It catalyses the reaction N-terminal L-seryl-[protein] + acetyl-CoA = N-terminal N(alpha)-acetyl-L-seryl-[protein] + CoA + H(+). It carries out the reaction N-terminal L-valyl-[protein] + acetyl-CoA = N-terminal N(alpha)-acetyl-L-valyl-[protein] + CoA + H(+). The catalysed reaction is N-terminal L-cysteinyl-[protein] + acetyl-CoA = N-terminal N(alpha)-acetyl-L-cysteinyl-[protein] + CoA + H(+). The enzyme catalyses N-terminal L-threonyl-[protein] + acetyl-CoA = N-terminal N(alpha)-acetyl-L-threonyl-[protein] + CoA + H(+). Its function is as follows. Catalytic subunit of the NatA N-alpha-acetyltransferase complex. Required for male gametocyte development, embryogenesis, suspensor development and the formation of the quiescent center (QC) in the root meristem. Involved in plant immunity through the regulation of SNC1 and RPM1 stability. This chain is N-terminal acetyltransferase A complex catalytic subunit NAA10, found in Arabidopsis thaliana (Mouse-ear cress).